The following is a 166-amino-acid chain: Ureidoglycolate lyase (166 aa).

It belongs to the ureidoglycolate lyase family. In terms of assembly, homodimer. Ni(2+) is required as a cofactor.

The catalysed reaction is (S)-ureidoglycolate = urea + glyoxylate. The protein operates within nitrogen metabolism; (S)-allantoin degradation. In terms of biological role, catalyzes the catabolism of the allantoin degradation intermediate (S)-ureidoglycolate, generating urea and glyoxylate. Involved in the utilization of allantoin as nitrogen source. The sequence is that of Ureidoglycolate lyase from Rhizobium etli (strain CIAT 652).